The chain runs to 142 residues: Small ribosomal subunit protein uS12 (142 aa).

The protein belongs to the universal ribosomal protein uS12 family. Part of the 30S ribosomal subunit.

Its function is as follows. With S4 and S5 plays an important role in translational accuracy. Located at the interface of the 30S and 50S subunits. The sequence is that of Small ribosomal subunit protein uS12 from Methanoregula boonei (strain DSM 21154 / JCM 14090 / 6A8).